Here is a 199-residue protein sequence, read N- to C-terminus: ATP-dependent Clp protease proteolytic subunit 2 (199 aa).

S98 (nucleophile) is an active-site residue. Residue H123 is part of the active site.

Belongs to the peptidase S14 family. Fourteen ClpP subunits assemble into 2 heptameric rings which stack back to back to give a disk-like structure with a central cavity, resembling the structure of eukaryotic proteasomes.

The protein localises to the cytoplasm. The enzyme catalyses Hydrolysis of proteins to small peptides in the presence of ATP and magnesium. alpha-casein is the usual test substrate. In the absence of ATP, only oligopeptides shorter than five residues are hydrolyzed (such as succinyl-Leu-Tyr-|-NHMec, and Leu-Tyr-Leu-|-Tyr-Trp, in which cleavage of the -Tyr-|-Leu- and -Tyr-|-Trp bonds also occurs).. Its function is as follows. Cleaves peptides in various proteins in a process that requires ATP hydrolysis. Has a chymotrypsin-like activity. Plays a major role in the degradation of misfolded proteins. In Corynebacterium diphtheriae (strain ATCC 700971 / NCTC 13129 / Biotype gravis), this protein is ATP-dependent Clp protease proteolytic subunit 2.